The primary structure comprises 681 residues: Calpain-C (681 aa).

One can recognise a Calpain catalytic domain in the interval 18–331; that stretch reads LWEDPDFPAV…FSTMEVVYLD (314 aa). Residues 332–481 form a domain III region; that stretch reads TETSNDEEML…ILGTGSFRLS (150 aa). A linker region spans residues 482 to 514; sequence CLETQTMILLDPFPALKSTDAERCGGPKVKSVC. The domain IV stretch occupies residues 515–681; sequence QYEPVYMQLA…HDWIKSILSC (167 aa). Residues 552–587 enclose the EF-hand domain; the sequence is ANIDICRQVIALQDRSGSGRITFQQFKTFMVNLKSW. 4 residues coordinate Ca(2+): D565, S567, S569, and R571.

It belongs to the peptidase C2 family. As to expression, localized to the salivary glands in the larva.

The protein localises to the cytoplasm. In terms of biological role, not known; does not seem to have protease activity. The polypeptide is Calpain-C (Drosophila melanogaster (Fruit fly)).